Consider the following 412-residue polypeptide: MAGSAPEGTQFDTRQFDQRLNEVLDGQDEFFTSYDEVHESFDAMGLQENLLRGIYAYGFEKPSAIQQRGIVPFCKGLDVIQQAQSGTGKTATFCSGVLQQLDYALLQCQALVLAPTRELAQQIEKVMRALGDYQGVKVHACVGGTSVREDQRILQAGVHVVVGTPGRVFDMLRRQSLRPDCIKMFVLDEADEMLSRGFKDQIYDIFQLLPPKIQVGVFSATMPPEALEITRKFMSKPVRILVKRDELTLEGIKQFYVNVEKEDWKLETLCDLYETLAITQSVIFVNTRRKVDWLTDKMRSRDHTVSATHGDMDQNTRDIIMREFRSGSSRVLITTDLLARGIDVQQVSLVINFDLPTQPENYLHRIGRSGRFGRKGVAINFVTLDDQRMLFDIQKFYNVVVEELPSNVADLL.

A2 carries the post-translational modification N-acetylalanine. The Q motif signature appears at E39–Q67. The Helicase ATP-binding domain occupies I70–I240. A83 to T90 is an ATP binding site. T145 is modified (phosphothreonine). The short motif at D188–D191 is the DEAD box element. The Helicase C-terminal domain maps to G251–L412.

The protein belongs to the DEAD box helicase family. eIF4A subfamily. EIF4F is a multi-subunit complex, the composition of which varies with external and internal environmental conditions. It is composed of at least EIF4A, EIF4E and EIF4G. In terms of tissue distribution, ubiquitous. Preferentially expressed in flowers, young leaves and roots.

It localises to the cytoplasm. The enzyme catalyses ATP + H2O = ADP + phosphate + H(+). In terms of biological role, ATP-dependent RNA helicase which is a subunit of the eIF4F complex involved in cap recognition and is required for mRNA binding to ribosome. In the current model of translation initiation, eIF4A unwinds RNA secondary structures in the 5'-UTR of mRNAs which is necessary to allow efficient binding of the small ribosomal subunit, and subsequent scanning for the initiator codon. This is Eukaryotic initiation factor 4A-2 (TIF4A-2) from Arabidopsis thaliana (Mouse-ear cress).